The following is a 78-amino-acid chain: Acyl carrier protein (78 aa).

The Carrier domain maps to 1 to 76 (MAIHPKVKDI…DVASYLEKKG (76 aa)). An O-(pantetheine 4'-phosphoryl)serine modification is found at serine 36.

This sequence belongs to the acyl carrier protein (ACP) family. In terms of processing, 4'-phosphopantetheine is transferred from CoA to a specific serine of apo-ACP by AcpS. This modification is essential for activity because fatty acids are bound in thioester linkage to the sulfhydryl of the prosthetic group.

It is found in the cytoplasm. It participates in lipid metabolism; fatty acid biosynthesis. Functionally, carrier of the growing fatty acid chain in fatty acid biosynthesis. The polypeptide is Acyl carrier protein (Bdellovibrio bacteriovorus (strain ATCC 15356 / DSM 50701 / NCIMB 9529 / HD100)).